We begin with the raw amino-acid sequence, 151 residues long: FUN14 domain-containing protein 2 (151 aa).

Residues 1–42 lie on the Cytoplasmic side of the membrane; sequence MAANSQGNFDGKFEALDLAELTKKQPWWRKLFGQESGPSAEK. Residues 43–63 traverse the membrane as a helical segment; that stretch reads YSVATQLVIGGVTGWCTGFVF. Residues 64–69 are Mitochondrial intermembrane-facing; it reads QKVGKL. The helical transmembrane segment at 70-90 threads the bilayer; the sequence is AATAVGGGFFLLQLANHTGYI. Topologically, residues 91–126 are cytoplasmic; it reads KVDWQRVEKDMKKAKEQLKIRKNKQIPTEVKSKAEE. Residues 127–147 form a helical membrane-spanning segment; the sequence is VVSFVKKNVLVTGGFFGGFLL. Topologically, residues 148–151 are mitochondrial intermembrane; that stretch reads GMAS.

Belongs to the FUN14 family. In terms of tissue distribution, highly expressed in platelet (at protein level). Expressed in liver, brain, heart and muscle.

The protein localises to the mitochondrion outer membrane. The protein resides in the nucleus. In terms of biological role, binds directly and specifically 1,2-Diacyl-sn-glycero-3-phospho-(1'-myo-inositol-3',4',5'-bisphosphate) (PIP3) leading to the recruitment of PIP3 to mitochondria and may play a role in the regulation of the platelet activation via AKT/GSK3B/cGMP signaling pathways. May act as transcription factor that regulates SREBP1 (isoform SREBP-1C) expression in order to modulate triglyceride (TG) homeostasis in hepatocytes. The sequence is that of FUN14 domain-containing protein 2 from Mus musculus (Mouse).